The sequence spans 545 residues: Inosine-5'-monophosphate dehydrogenase (545 aa).

2 consecutive CBS domains span residues Met-138–Thr-194 and Met-201–Thr-258. NAD(+) contacts are provided by residues Asp-295 and Gly-347–Gly-349. K(+) is bound by residues Gly-349 and Gly-351. Ser-352 contacts IMP. Cys-354 is a binding site for K(+). The Thioimidate intermediate role is filled by Cys-354. Residues Asp-387–Gly-389, Gly-410–Gly-411, and Tyr-434–Gly-438 each bind IMP. The active-site Proton acceptor is the Arg-455. IMP is bound at residue Glu-470. Residues Glu-524, Ser-525, and His-526 each contribute to the K(+) site.

It belongs to the IMPDH/GMPR family. Homotetramer. K(+) serves as cofactor.

It catalyses the reaction IMP + NAD(+) + H2O = XMP + NADH + H(+). Its pathway is purine metabolism; XMP biosynthesis via de novo pathway; XMP from IMP: step 1/1. With respect to regulation, mycophenolic acid (MPA) is a non-competitive inhibitor that prevents formation of the closed enzyme conformation by binding to the same site as the amobile flap. In contrast, mizoribine monophosphate (MZP) is a competitive inhibitor that induces the closed conformation. MPA is a potent inhibitor of mammalian IMPDHs but a poor inhibitor of the bacterial enzymes. MZP is a more potent inhibitor of bacterial IMPDH. In terms of biological role, catalyzes the conversion of inosine 5'-phosphate (IMP) to xanthosine 5'-phosphate (XMP), the first committed and rate-limiting step in the de novo synthesis of guanine nucleotides, and therefore plays an important role in the regulation of cell growth. This is Inosine-5'-monophosphate dehydrogenase from Bifidobacterium longum (strain NCC 2705).